The following is a 119-amino-acid chain: Ribonuclease P protein component (119 aa).

It belongs to the RnpA family. In terms of assembly, consists of a catalytic RNA component (M1 or rnpB) and a protein subunit.

It carries out the reaction Endonucleolytic cleavage of RNA, removing 5'-extranucleotides from tRNA precursor.. Functionally, RNaseP catalyzes the removal of the 5'-leader sequence from pre-tRNA to produce the mature 5'-terminus. It can also cleave other RNA substrates such as 4.5S RNA. The protein component plays an auxiliary but essential role in vivo by binding to the 5'-leader sequence and broadening the substrate specificity of the ribozyme. The sequence is that of Ribonuclease P protein component from Salmonella paratyphi A (strain AKU_12601).